The sequence spans 98 residues: (4S)-4-hydroxy-5-phosphonooxypentane-2,3-dione isomerase (98 aa).

The 90-residue stretch at 2–91 (NVTLVEINIK…MSQPRQKRSF (90 aa)) folds into the ABM domain.

The protein belongs to the LsrG family. Homodimer.

The protein resides in the cytoplasm. The catalysed reaction is (2S)-2-hydroxy-3,4-dioxopentyl phosphate = 3-hydroxy-2,4-dioxopentyl phosphate. In terms of biological role, involved in the degradation of phospho-AI-2, thereby terminating induction of the lsr operon and closing the AI-2 signaling cycle. Catalyzes the conversion of (4S)-4-hydroxy-5-phosphonooxypentane-2,3-dione (P-DPD) to 3-hydroxy-5-phosphonooxypentane-2,4-dione (P-HPD). This is (4S)-4-hydroxy-5-phosphonooxypentane-2,3-dione isomerase from Klebsiella pneumoniae subsp. pneumoniae (strain ATCC 700721 / MGH 78578).